The primary structure comprises 260 residues: Adenosylcobinamide-GDP ribazoletransferase (260 aa).

6 helical membrane passes run 40–60, 64–84, 117–137, 142–162, 188–208, and 209–229; these read AFPF…LLLL, ADPL…TGAL, YGAI…AVIA, PLTA…AIAW, QFAL…AFGL, and RPLV…TAFI.

This sequence belongs to the CobS family. Requires Mg(2+) as cofactor.

It is found in the cell inner membrane. It catalyses the reaction alpha-ribazole + adenosylcob(III)inamide-GDP = adenosylcob(III)alamin + GMP + H(+). The catalysed reaction is alpha-ribazole 5'-phosphate + adenosylcob(III)inamide-GDP = adenosylcob(III)alamin 5'-phosphate + GMP + H(+). The protein operates within cofactor biosynthesis; adenosylcobalamin biosynthesis; adenosylcobalamin from cob(II)yrinate a,c-diamide: step 7/7. Functionally, joins adenosylcobinamide-GDP and alpha-ribazole to generate adenosylcobalamin (Ado-cobalamin). Also synthesizes adenosylcobalamin 5'-phosphate from adenosylcobinamide-GDP and alpha-ribazole 5'-phosphate. The chain is Adenosylcobinamide-GDP ribazoletransferase from Rhizobium johnstonii (strain DSM 114642 / LMG 32736 / 3841) (Rhizobium leguminosarum bv. viciae).